Consider the following 537-residue polypeptide: Cytochrome P450 monooxygenase alt2 (537 aa).

Residues 4–24 (HLLILAAVVLLIIHIVNNFLI) form a helical membrane-spanning segment. Residue Cys474 coordinates heme.

It belongs to the cytochrome P450 family. The cofactor is heme.

Its subcellular location is the membrane. Its pathway is secondary metabolite biosynthesis. In terms of biological role, cytochrome P450 monooxygenase; part of the gene cluster that mediates the biosynthesis of alternapyrone derivatives. Alternapyrone is a decaketide with octa-methylation from methionine on every C2 unit except the third unit. All the domains in the polyketide synthase alt5 are apparently involved in alternapyrone synthesis, that is, the 8 CMeT, 7 KR, 7 DH, and 4 ER reactions in the 9 KS-mediated condensation steps required for alternapyrone synthesis. the alternapyrone produced by alt5 might be intensively modified by cytochrome P450 monooxygenases alt1, alt2 and alt3 and FAD-dependent oxidoreductase alt4 present in the alt gene cluster. In Alternaria solani, this protein is Cytochrome P450 monooxygenase alt2.